A 723-amino-acid polypeptide reads, in one-letter code: Polyribonucleotide nucleotidyltransferase (723 aa).

Mg(2+) contacts are provided by Asp-488 and Asp-494. A KH domain is found at 555–614 (PRMITMKIHPDKIREVIGKGGSTIQALTKETGTTIDIQEDGTITIASTSTEGMAEAKRRI). An S1 motif domain is found at 624-692 (GKIYAGTVLK…EKGRLRLSLK (69 aa)). Residues 701–723 (SISPINAGESAAPAAPAGGSEQQ) form a disordered region. Residues 707–723 (AGESAAPAAPAGGSEQQ) are compositionally biased toward low complexity.

It belongs to the polyribonucleotide nucleotidyltransferase family. The cofactor is Mg(2+).

It localises to the cytoplasm. It carries out the reaction RNA(n+1) + phosphate = RNA(n) + a ribonucleoside 5'-diphosphate. Its function is as follows. Involved in mRNA degradation. Catalyzes the phosphorolysis of single-stranded polyribonucleotides processively in the 3'- to 5'-direction. The sequence is that of Polyribonucleotide nucleotidyltransferase from Cupriavidus taiwanensis (strain DSM 17343 / BCRC 17206 / CCUG 44338 / CIP 107171 / LMG 19424 / R1) (Ralstonia taiwanensis (strain LMG 19424)).